Consider the following 59-residue polypeptide: Insertion element IS986 uncharacterized 6.6 kDa protein (59 aa).

A disordered region spans residues 1–26 (MRKWVRQAQVDAGARPGTTTEESAEI).

It belongs to the transposase 8 family.

The polypeptide is Insertion element IS986 uncharacterized 6.6 kDa protein (Mycobacterium tuberculosis).